A 376-amino-acid chain; its full sequence is Alcohol dehydrogenase class-3 (376 aa).

Residues C47, H69, C99, C102, C105, C113, and C176 each coordinate Zn(2+).

It belongs to the zinc-containing alcohol dehydrogenase family. Class-III subfamily. Homodimer. The cofactor is Zn(2+). As to expression, expressed in the skeletal muscle, heart, gill filaments and liver, with highest levels in the kidney.

It is found in the cytoplasm. The catalysed reaction is a primary alcohol + NAD(+) = an aldehyde + NADH + H(+). The enzyme catalyses a secondary alcohol + NAD(+) = a ketone + NADH + H(+). It catalyses the reaction S-(hydroxymethyl)glutathione + NADP(+) = S-formylglutathione + NADPH + H(+). It carries out the reaction S-(hydroxymethyl)glutathione + NAD(+) = S-formylglutathione + NADH + H(+). The catalysed reaction is S-nitrosoglutathione + NADH + H(+) = S-(hydroxysulfenamide)glutathione + NAD(+). Class-III ADH is remarkably ineffective in oxidizing ethanol, but it readily catalyzes the oxidation of long-chain primary alcohols and the oxidation of S-(hydroxymethyl) glutathione. Also acts as a S-nitroso-glutathione reductase by catalyzing the NADH-dependent reduction of S-nitrosoglutathione, thereby regulating protein S-nitrosylation. This is Alcohol dehydrogenase class-3 from Sparus aurata (Gilthead sea bream).